A 1035-amino-acid polypeptide reads, in one-letter code: DNA polymerase I B, mitochondrial (1035 aa).

The transit peptide at 1–42 (MAVAPPLPPAPARLLRRWQGSSPWLSSSFGRTRYFSRPAFAA) directs the protein to the mitochondrion. A disordered region spans residues 100-124 (TNGTTPLRVGNLRHDPSEDIRSSNY). Residues 111–120 (LRHDPSEDIR) show a composition bias toward basic and acidic residues. The region spanning 317-478 (FGNGKTCIWV…LYESLKNKLE (162 aa)) is the 3'-5' exonuclease domain. The polymerase stretch occupies residues 699–1032 (HAIAALCEVF…VDAKYAKSWY (334 aa)).

The protein belongs to the DNA polymerase type-A family.

It localises to the mitochondrion. The enzyme catalyses DNA(n) + a 2'-deoxyribonucleoside 5'-triphosphate = DNA(n+1) + diphosphate. Its activity is regulated as follows. Not inhibited by aphidicolin. Functionally, in addition to polymerase activity, this DNA polymerase exhibits 5'-3' exonuclease activity. May be required for DNA replication and accumulation in mitochondria. The protein is DNA polymerase I B, mitochondrial of Oryza sativa subsp. japonica (Rice).